The chain runs to 210 residues: MEEPASADPPRIFWKSRRRSASANGRSLQQELNKEAADEQLNNQAHEEAMKIDDANAVSTDDDVHPDPKANLSEKRKALFEPLEPINGKRSSAEMLLPPPDFEPASYPKGWLVGKKRKLVNVDVVESMRRIAIQEMNRKDREINGLNEQLEEDSRVLELLQKQLADERKKRTEIEKENSMLHEQVSMLMNMLDENEAFDEEGEAPPPDTL.

Residues 1–97 (MEEPASADPP…GKRSSAEMLL (97 aa)) are disordered. Positions 29–49 (QQELNKEAADEQLNNQAHEEA) form a coiled coil. Composition is skewed to basic and acidic residues over residues 45-54 (AHEEAMKIDD) and 62-79 (DDVH…RKAL). The stretch at 129–184 (RRIAIQEMNRKDREINGLNEQLEEDSRVLELLQKQLADERKKRTEIEKENSMLHEQ) forms a coiled coil.

As to quaternary structure, interacts with OSK3 and OSK4. As to expression, mostly expressed in leaves, seedlings and floral organs, and, to a lower extent, in panicle, roots, nodes, internodes, leaf joint and sheath.

It is found in the nucleus. In terms of biological role, regulates flowering time via a photoperiod-dependent pathway. Suppressor of flowering that upregulates HD1 and down-regulates EHD1 in long days (LD), thus leading to the down-regulation of HD3A and RFT1. Triggers OSK4-mediated HD1 phosphorylation. The chain is Protein HEADING DATE REPRESSOR 1 from Oryza sativa subsp. japonica (Rice).